The sequence spans 1738 residues: MRLLWGLAWVFSFCASSLQKPRLLLFSPSVVNLGTPLSVGVQLLDAPPGQEVKGSVFLRNPKGGSCSPKKDFKLSSGDDFVLLSLEVPLEDVRSCGLFDLRRAPHIQLVAQSPWLRNTAFKATETQGVNLLFSSRRGHIFVQTDQPIYNPGQRVRYRVFALDQKMRPSTDFLTITVENSHGLRVLKKEIFTSTSIFQDAFTIPDISEPGTWKISARFSDGLESNRSTHFEVKKYVLPNFEVKITPWKPYILMVPSNSDEIQLDIQARYIYGKPVQGVAYTRFALMDEQGKRTFLRGLETQAKLVEGRTHISISKDQFQAALDKINIGVRDLEGLRLYAATAVIESPGGEMEEAELTSWRFVSSAFSLDLSRTKRHLVPGAHFLLQALVQEMSGSEASNVPVKVSATLVSGSDSQVLDIQQSTNGIGQVSISFPIPPTVTELRLLVSAGSLYPAIARLTVQAPPSRGTGFLSIEPLDPRSPSVGDTFILNLQPVGIPAPTFSHYYYMIISRGQIMAMGREPRKTVTSVSVLVDHQLAPSFYFVAYFYHQGHPVANSLLINIQSRDCEGKLQLKVDGAKEYRNADMMKLRIQTDSKALVALGAVDMALYAVGGRSHKPLDMSKVFEVINSYNVGCGPGGGDDALQVFQDAGLAFSDGDRLTQTREDLSCPKEKKSRQKRNVNFQKAVSEKLGQYSSPDAKRCCQDGMTKLPMKRTCEQRAARVPQQACREPFLSCCKFAEDLRRNQTRSQAHLARNNHNMLQEEDLIDEDDILVRTSFPENWLWRVEPVDSSKLLTVWLPDSMTTWEIHGVSLSKSKGLCVAKPTRVRVFRKFHLHLRLPISIRRFEQFELRPVLYNYLNDDVAVSVHVTPVEGLCLAGGGMMAQQVTVPAGSARPVAFSVVPTAAANVPLKVVARGVFDLGDAVSKILQIEKEGAIHREELVYNLDPLNNLGRTLEIPGSSDPNIVPDGDFSSLVRVTASEPLETMGSEGALSPGGVASLLRLPQGCAEQTMIYLAPTLTASNYLDRTEQWSKLSPETKDHAVDLIQKGYMRIQQFRKNDGSFGAWLHRDSSTWLTAFVLKILSLAQEQVGNSPEKLQETASWLLAQQLGDGSFHDPCPVIHRAMQGGLVGSDETVALTAFVVIALHHGLDVFQDDDAKQLKNRVEASITKANSFLGQKASAGLLGAHAAAITAYALTLTKASEDLRNVAHNSLMAMAEETGEHLYWGLVLGSQDKVVLRPTAPRSPTEPVPQAPALWIETTAYALLHLLLREGKGKMADKAASWLTHQGSFHGAFRSTQDTVVTLDALSAYWIASHTTEEKALNVTLSSMGRNGLKTHGLHLNNHQVKGLEEELKFSLGSTISVKVEGNSKGTLKILRTYNVLDMKNTTCQDLQIEVKVTGAVEYAWDANEDYEDYYDMPAADDPSVPLQPVTPLQLFEGRRSRRRREAPKVVEEQESRVQYTVCIWRNGKLGLSGMAIADITLLSGFHALRADLEKLTSLSDRYVSHFETDGPHVLLYFDSVPTTRECVGFGASQEVVVGLVQPSSAVLYDYYSPDHKCSVFYAAPTKSQLLATLCSGDVCQCAEGKCPRLLRSLERRVEDKDGYRMRFACYYPRVEYGFTVKVLREDGRAAFRLFESKITQVLHFRKDTMASIGQTRNFLSRASCRLRLEPNKEYLIMGMDGETSDNKGDPQYLLDSNTWIEEMPSEQMCKSTRHRAACFQLKDFLMEFSSRGCQV.

The first 19 residues, Met1–Gln19, serve as a signal peptide directing secretion. Cys66 and Cys95 are joined by a disulfide. N-linked (GlcNAc...) asparagine glycosylation occurs at Asn224. An intrachain disulfide couples Cys633 to Cys667. Residues Arg674–Arg677 constitute a propeptide that is removed on maturation. Intrachain disulfides connect Cys700-Cys726, Cys701-Cys733, and Cys714-Cys734. An Anaphylatoxin-like domain is found at Cys700 to Cys734. An N-linked (GlcNAc...) asparagine glycan is attached at Asn743. Residues Cys1006 to Gln1009 constitute a cross-link (isoglutamyl cysteine thioester (Cys-Gln)). 2 N-linked (GlcNAc...) asparagine glycosylation sites follow: Asn1324 and Asn1387. 3 positions are modified to sulfotyrosine: Tyr1413, Tyr1416, and Tyr1417. The propeptide occupies Arg1444–Arg1447. Intrachain disulfides connect Cys1465–Cys1529, Cys1577–Cys1582, Cys1589–Cys1667, Cys1612–Cys1736, and Cys1712–Cys1721. Residues Cys1589–Cys1736 enclose the NTR domain.

In absence of complement activation, circulates in blood as a disulfide-linked trimer of an alpha, beta and gamma chain. In terms of assembly, complement C4b is composed of complement C4b-A, complement C4 beta and complement C4 gamma chains that are associated via disulfide bonds. Non-enzymatic component of the C3 convertase, also named C4bC2b, composed of the serine protease complement C2b (C2), as well as complement C4b. Non-enzymatic component of the C5 convertase, also named C4bC2bC3b, composed of the serine protease complement C2b (C2), complement C3b, as well as complement C4b. Post-translationally, prior to secretion, the single-chain precursor is enzymatically cleaved by plasminogen (PLG) to yield non-identical chains alpha, beta and gamma. During activation of the complement systems, the alpha chain is cleaved into C4a and C4b by different proteases depending on the complement pathway: C4b stays linked to the beta and gamma chains, while C4a is released in the plasma. The alpha chain is cleaved by C1S to generate C4a and C4b following activation by the classical complement system. The alpha chain is cleaved to generate C4a and C4b by MASP2 following activation by the lectin complement system. The alpha chain is cleaved by GZMK to generate C4a and C4b following activation by the GZMK complement system. Further degradation of C4b by C1 into the inactive fragments C4c and C4d blocks the generation of C3 convertase. The proteolytic cleavages often are incomplete so that many structural forms can be found in plasma. Upon activation, the internal thioester bond reacts with carbohydrate antigens on the target surface to form amide or ester bonds, leading to covalent association with the surface of pathogens. In terms of processing, complement C4b interacts with complement C3b via a thioester linkage.

Its subcellular location is the secreted. It localises to the cell surface. Precursor of non-enzymatic components of the classical, lectin and GZMK complement pathways, which consist in a cascade of proteins that leads to phagocytosis and breakdown of pathogens and signaling that strengthens the adaptive immune system. Functionally, non-enzymatic component of C3 and C5 convertases. Generated following cleavage by complement proteases (C1S, MASP2 or GZMK, depending on the complement pathway), it covalently attaches to the surface of pathogens, where it acts as an opsonin that marks the surface of antigens for removal. It then recruits the serine protease complement C2b to form the C3 and C5 convertases, which cleave and activate C3 and C5, respectively, the next components of the complement pathways. Complement C4b-A isotype is responsible for effective binding to form amide bonds with immune aggregates or protein antigens, while complement C4b-B isotype catalyzes the transacylation of the thioester carbonyl group to form ester bonds with carbohydrate antigens. Its function is as follows. Putative humoral mediator released following cleavage by complement proteases (C1S, MASP2 or GZMK, depending on the complement pathway). While it is strongly similar to anaphylatoxins, its role is unclear. Was reported to act as a mediator of local inflammatory process; however these effects were probably due to contamination with C3a and/C5a anaphylatoxins in biological assays. In Mus musculus (Mouse), this protein is Complement C4-B.